The chain runs to 2586 residues: Highly reducing polyketide synthase FUM1 (2586 aa).

In terms of domain architecture, Ketosynthase family 3 (KS3) spans 29-451; it reads VLPVAIVGMG…GANAHCIIET (423 aa). Active-site for beta-ketoacyl synthase activity residues include cysteine 201, histidine 336, and histidine 374. The interval 609-928 is malonyl-CoA:ACP transacylase (MAT) domain; sequence IFTGQGAQWV…TESLLKLAGE (320 aa). Residues 980-1111 form an N-terminal hotdog fold region; the sequence is HELLGSRTLE…GQVRPGQDAH (132 aa). Residues 980 to 1269 form a dehydratase (DH) domain region; it reads HELLGSRTLE…LEDGKFSPLE (290 aa). The PKS/mFAS DH domain maps to 980 to 1274; it reads HELLGSRTLE…FSPLEMDLAE (295 aa). The active-site Proton acceptor; for dehydratase activity is the histidine 1012. The interval 1125-1274 is C-terminal hotdog fold; it reads QHYPRLVDNL…FSPLEMDLAE (150 aa). Catalysis depends on aspartate 1186, which acts as the Proton donor; for dehydratase activity. Residues 1450–1627 form a methyltransferase (CMet) domain region; sequence DFFATAGHTR…GFSGVDSAIY (178 aa). An enoyl reductase (ER) (ER) domain region spans residues 1862 to 2172; it reads GLLQTLGWVP…KGVHLGKIVV (311 aa). The segment at 2197 to 2373 is ketoreductase (KR) domain; the sequence is ASYLLVGGLG…ASVLQIGLIE (177 aa). Residues 2486 to 2565 form the Carrier domain; it reads PATVELVTNE…GLARLTVDGL (80 aa). Position 2524 is an O-(pantetheine 4'-phosphoryl)serine (serine 2524).

Its pathway is mycotoxin biosynthesis. Functionally, highly reducing polyketide synthase; part of the gene cluster that mediates the biosynthesis of fumonisins B1 (FB1), B2 (FB2), B3 (FB3), and B4 (FB4), which are carcinogenic mycotoxins. The biosynthesis starts with the FUM1-catalyzed carbon chain assembly from one molecule of acetyl-CoA, eight molecules of malonyl-CoA, and two molecules of methionine (in S-adenosyl form). The C18 polyketide chain is released from the enzyme by a nucleophilic attack of a carbanion, which is derived from R-carbon of alanine by decarboxylation, on the carbonyl carbon of polyketide acyl chain. This step is catalyzed by the pyridoxal 5'-phosphate-dependent aminoacyl transferase FUM8. The resultant 3-keto intermediate is then stereospecifically reduced to a 3-hydroxyl product by reductase FUM13. Subsequent oxidations at C-10 by the cytochrome P450 monooxygenase FUM2, C-14 and C-15 by FUM6, FUM12 or FUM15, tricarballylic esterification of the hydroxyl groups on C-14 and C-15 by acyltransferase FUM14, and C-5 hydroxylation by 2-keto-glutarate-dependent dioxygenase FUM3 furnish the biosynthesis of fumonisins. The tricarballylic moieties are most likely derived from the citric acid cycle, and their addition to the carbon backbone may involve FUM7, FUM10, FUM11 and FUM14. This Gibberella moniliformis (strain M3125 / FGSC 7600) (Maize ear and stalk rot fungus) protein is Highly reducing polyketide synthase FUM1.